The sequence spans 284 residues: 4-diphosphocytidyl-2-C-methyl-D-erythritol kinase (284 aa).

K9 is a catalytic residue. 90–100 (PLVSGLGGDSS) provides a ligand contact to ATP. D132 is a catalytic residue.

It belongs to the GHMP kinase family. IspE subfamily.

It catalyses the reaction 4-CDP-2-C-methyl-D-erythritol + ATP = 4-CDP-2-C-methyl-D-erythritol 2-phosphate + ADP + H(+). Its pathway is isoprenoid biosynthesis; isopentenyl diphosphate biosynthesis via DXP pathway; isopentenyl diphosphate from 1-deoxy-D-xylulose 5-phosphate: step 3/6. In terms of biological role, catalyzes the phosphorylation of the position 2 hydroxy group of 4-diphosphocytidyl-2C-methyl-D-erythritol. The chain is 4-diphosphocytidyl-2-C-methyl-D-erythritol kinase from Dehalococcoides mccartyi (strain ATCC BAA-2266 / KCTC 15142 / 195) (Dehalococcoides ethenogenes (strain 195)).